We begin with the raw amino-acid sequence, 660 residues long: MTNIIELPEVLANQIAAGEVVERPASVVKELVENAIDAKSSQITVEIEESGLKMIQVTDNGEGMSHEDLPLSLRRHATSKIKSQSDLFRIRTLGFRGEALPSVASISKITIKTATKEVTHGSLLIATGGEIETLEAISTPTGTKIKVENLFYNTPARLKYMKSLQAELAHIVDVVNRLSLAHPEVAFTLISDGRQLTQTSGTGDLRQAIAGIYGLNTTKKMLVISNADLDFEVSGYVSLPELTRANRNYMTILVNGRYIKNFLLNRAILDGYGSKLMVGRFPIVVIDIQIDPYLADVNVHPTKQEVRISKERELMALISTAISESLKEQDLIPDALENLAKSSTRHFSKPEQTQLPLQSRGLYYDPQKNDFFVKESAVSEKIPETDFYSGAVDNSVKVEKAELLPHSEEVIGPSSVKHASRPQNTFTETDHPNLDLKNRQKLSQMLNRLENEEQSVFPELDYFGQMHGTYLFAQGKDGLFIIDQHAAQERVKYEYYRDKIGDVDSSLQQLLVPYLFEFSGSDFINLQEKMALLNEVGIFLEVYGHNTFILREHPIWMKEEEIASGVYEMCDMLLLTNEVSIKTYRAELAIMMSCKRSIKANHSLDDYSARNLLLQLAQCQNPYNCPHGRPVLINFSKADMEKMFRRIQENHTSLRELGKY.

This sequence belongs to the DNA mismatch repair MutL/HexB family.

This protein is involved in the repair of mismatches in DNA. It is required for dam-dependent methyl-directed DNA mismatch repair. May act as a 'molecular matchmaker', a protein that promotes the formation of a stable complex between two or more DNA-binding proteins in an ATP-dependent manner without itself being part of a final effector complex. The protein is DNA mismatch repair protein MutL of Streptococcus pyogenes serotype M12 (strain MGAS2096).